The following is a 492-amino-acid chain: N-succinylglutamate 5-semialdehyde dehydrogenase (492 aa).

NAD(+) is bound at residue Gly-220–Gly-225. Residues Glu-243 and Cys-277 contribute to the active site.

It belongs to the aldehyde dehydrogenase family. AstD subfamily.

It catalyses the reaction N-succinyl-L-glutamate 5-semialdehyde + NAD(+) + H2O = N-succinyl-L-glutamate + NADH + 2 H(+). Its pathway is amino-acid degradation; L-arginine degradation via AST pathway; L-glutamate and succinate from L-arginine: step 4/5. Its function is as follows. Catalyzes the NAD-dependent reduction of succinylglutamate semialdehyde into succinylglutamate. This chain is N-succinylglutamate 5-semialdehyde dehydrogenase, found in Escherichia coli O81 (strain ED1a).